Reading from the N-terminus, the 119-residue chain is uncharacterized protein (119 aa).

2 consecutive transmembrane segments (helical) span residues 7–27 (ILHN…LLLV) and 32–52 (YFFE…FLML).

It localises to the membrane. This is an uncharacterized protein from Saccharomyces cerevisiae (strain ATCC 204508 / S288c) (Baker's yeast).